We begin with the raw amino-acid sequence, 697 residues long: Probable glutamine--tRNA ligase (697 aa).

Positions 204 to 214 (PEPNGILHIGH) match the 'HIGH' region motif. ATP-binding positions include 205–207 (EPN) and 211–217 (HIGHAKA). The L-glutamine site is built by Asp-237 and Tyr-386. ATP contacts are provided by residues Thr-405, 434 to 435 (RL), and 442 to 444 (LSK). A 'KMSKS' region motif is present at residues 441–445 (VLSKR).

This sequence belongs to the class-I aminoacyl-tRNA synthetase family.

It carries out the reaction tRNA(Gln) + L-glutamine + ATP = L-glutaminyl-tRNA(Gln) + AMP + diphosphate. This is Probable glutamine--tRNA ligase from Encephalitozoon cuniculi (strain GB-M1) (Microsporidian parasite).